Consider the following 314-residue polypeptide: Methionyl-tRNA formyltransferase (314 aa).

113–116 contacts (6S)-5,6,7,8-tetrahydrofolate; sequence SLLP.

Belongs to the Fmt family.

The enzyme catalyses L-methionyl-tRNA(fMet) + (6R)-10-formyltetrahydrofolate = N-formyl-L-methionyl-tRNA(fMet) + (6S)-5,6,7,8-tetrahydrofolate + H(+). Functionally, attaches a formyl group to the free amino group of methionyl-tRNA(fMet). The formyl group appears to play a dual role in the initiator identity of N-formylmethionyl-tRNA by promoting its recognition by IF2 and preventing the misappropriation of this tRNA by the elongation apparatus. The sequence is that of Methionyl-tRNA formyltransferase from Chlorobaculum tepidum (strain ATCC 49652 / DSM 12025 / NBRC 103806 / TLS) (Chlorobium tepidum).